Consider the following 152-residue polypeptide: uncharacterized protein (152 aa).

Asparagine 2 carries N-linked (GlcNAc...) asparagine; by host glycosylation. The next 3 membrane-spanning stretches (helical) occupy residues 5–25 (MILLMVIASFVAGYLSTMNLW), 36–56 (LNDFYMVLLMVGWMIVMCYIL), and 68–88 (LIITITIIIIIVYAIRTQAFI). N-linked (GlcNAc...) asparagine; by host glycosylation is present at asparagine 113.

Its subcellular location is the membrane. This is an uncharacterized protein from Acanthamoeba polyphaga mimivirus (APMV).